A 323-amino-acid chain; its full sequence is Aspartate carbamoyltransferase catalytic subunit (323 aa).

Carbamoyl phosphate contacts are provided by R55 and T56. K83 is an L-aspartate binding site. Carbamoyl phosphate contacts are provided by R105, H138, and Q141. Positions 181 and 235 each coordinate L-aspartate. Residues G276 and P277 each contribute to the carbamoyl phosphate site.

It belongs to the aspartate/ornithine carbamoyltransferase superfamily. ATCase family. As to quaternary structure, heterododecamer (2C3:3R2) of six catalytic PyrB chains organized as two trimers (C3), and six regulatory PyrI chains organized as three dimers (R2).

The enzyme catalyses carbamoyl phosphate + L-aspartate = N-carbamoyl-L-aspartate + phosphate + H(+). Its pathway is pyrimidine metabolism; UMP biosynthesis via de novo pathway; (S)-dihydroorotate from bicarbonate: step 2/3. Catalyzes the condensation of carbamoyl phosphate and aspartate to form carbamoyl aspartate and inorganic phosphate, the committed step in the de novo pyrimidine nucleotide biosynthesis pathway. The protein is Aspartate carbamoyltransferase catalytic subunit of Corynebacterium aurimucosum (strain ATCC 700975 / DSM 44827 / CIP 107346 / CN-1) (Corynebacterium nigricans).